Here is a 335-residue protein sequence, read N- to C-terminus: Phosphoserine phosphatase RsbU (335 aa).

One can recognise a PPM-type phosphatase domain in the interval 123-333 (DIGAISVPAK…DDFTLIVLRR (211 aa)).

The catalysed reaction is O-phospho-L-serine + H2O = L-serine + phosphate. It catalyses the reaction O-phospho-D-serine + H2O = D-serine + phosphate. Stimulated by a long-lived interaction with RsbT. Positive regulator of sigma-B activity. Dephosphorylates RsbV in response to environmental stress conveyed from the RsbXST module. The chain is Phosphoserine phosphatase RsbU (rsbU) from Bacillus subtilis (strain 168).